The sequence spans 203 residues: Large ribosomal subunit protein uL13 (203 aa).

A2 is modified (N-acetylalanine). R59 is subject to Citrulline. S77 is subject to Phosphoserine; by ZIPK/DAPK3. R140 is subject to Citrulline. K191 is modified (N6-acetyllysine).

It belongs to the universal ribosomal protein uL13 family. Component of the 60S ribosome. Component of the GAIT complex. Interacts with EIF4G1. Phosphorylation at Ser-77 upon interferon-gamma treatment in monocytes involves a DAPK1-DAPK3 kinase cascade and is causing release from the ribosome, association with the GAIT complex and subsequent involvement in transcript-selective translation inhibition. In terms of processing, citrullinated by PADI4.

It localises to the cytoplasm. In terms of biological role, associated with ribosomes but is not required for canonical ribosome function and has extra-ribosomal functions. Component of the GAIT (gamma interferon-activated inhibitor of translation) complex which mediates interferon-gamma-induced transcript-selective translation inhibition in inflammation processes. Upon interferon-gamma activation and subsequent phosphorylation dissociates from the ribosome and assembles into the GAIT complex which binds to stem loop-containing GAIT elements in the 3'-UTR of diverse inflammatory mRNAs (such as ceruplasmin) and suppresses their translation. In the GAIT complex interacts with m7G cap-bound eIF4G at or near the eIF3-binding site and blocks the recruitment of the 43S ribosomal complex. Involved in methylation of rRNA. In Homo sapiens (Human), this protein is Large ribosomal subunit protein uL13 (RPL13A).